Consider the following 167-residue polypeptide: Ribosome maturation factor RimM (167 aa).

Residues 94 to 166 (QNRAWLHELE…YIVVPRFDEF (73 aa)) enclose the PRC barrel domain.

The protein belongs to the RimM family. In terms of assembly, binds ribosomal protein uS19.

The protein localises to the cytoplasm. An accessory protein needed during the final step in the assembly of 30S ribosomal subunit, possibly for assembly of the head region. Essential for efficient processing of 16S rRNA. May be needed both before and after RbfA during the maturation of 16S rRNA. It has affinity for free ribosomal 30S subunits but not for 70S ribosomes. The chain is Ribosome maturation factor RimM from Chlorobium phaeovibrioides (strain DSM 265 / 1930) (Prosthecochloris vibrioformis (strain DSM 265)).